The sequence spans 149 residues: Large ribosomal subunit protein bL9 (149 aa).

It belongs to the bacterial ribosomal protein bL9 family.

In terms of biological role, binds to the 23S rRNA. This Stenotrophomonas maltophilia (strain K279a) protein is Large ribosomal subunit protein bL9.